The primary structure comprises 235 residues: Octanoyltransferase (235 aa).

The region spanning 59–235 (PGSSQAVWLL…KKSLTERFGL (177 aa)) is the BPL/LPL catalytic domain. Substrate is bound by residues 101 to 108 (RGGEVTHH), 168 to 170 (SIG), and 181 to 183 (GLS). C199 (acyl-thioester intermediate) is an active-site residue.

It belongs to the LipB family.

It is found in the cytoplasm. The catalysed reaction is octanoyl-[ACP] + L-lysyl-[protein] = N(6)-octanoyl-L-lysyl-[protein] + holo-[ACP] + H(+). It participates in protein modification; protein lipoylation via endogenous pathway; protein N(6)-(lipoyl)lysine from octanoyl-[acyl-carrier-protein]: step 1/2. Its function is as follows. Catalyzes the transfer of endogenously produced octanoic acid from octanoyl-acyl-carrier-protein onto the lipoyl domains of lipoate-dependent enzymes. Lipoyl-ACP can also act as a substrate although octanoyl-ACP is likely to be the physiological substrate. The polypeptide is Octanoyltransferase (Prochlorococcus marinus (strain MIT 9211)).